We begin with the raw amino-acid sequence, 490 residues long: Cytochrome P450 2C1 (490 aa).

Residue cysteine 435 coordinates heme.

It belongs to the cytochrome P450 family. Heme is required as a cofactor.

It localises to the endoplasmic reticulum membrane. The protein resides in the microsome membrane. It carries out the reaction an organic molecule + reduced [NADPH--hemoprotein reductase] + O2 = an alcohol + oxidized [NADPH--hemoprotein reductase] + H2O + H(+). In terms of biological role, cytochromes P450 are a group of heme-thiolate monooxygenases. In liver microsomes, this enzyme is involved in an NADPH-dependent electron transport pathway. It oxidizes a variety of structurally unrelated compounds, including steroids, fatty acids, and xenobiotics. The protein is Cytochrome P450 2C1 (CYP2C1) of Oryctolagus cuniculus (Rabbit).